The primary structure comprises 666 residues: Probable potassium transport system protein Kup (666 aa).

A run of 12 helical transmembrane segments spans residues 16 to 36 (GFIIALGIVYGDIGTSPLYTM), 58 to 78 (ISLIIWTLTLITTIKYVLIAL), 98 to 118 (ISPWLIIPAMIGGATLLSDGA), 141 to 161 (IYQNQTNVIITTLVILIVLFG), 165 to 185 (FGTGFIGKIFGPVMFIWFSFL), 221 to 241 (IFILGSIFLATTGAEALYSDL), 253 to 273 (WPFVKMCIVLSYCGQAAWILA), 299 to 319 (LATLAAIIASQALISGSFTLI), 343 to 363 (LYIPVINWILFAVTSCTVLAF), 373 to 393 (YGLAITITMLMTTILLKYYLI), 399 to 419 (PILAHLAMAFFALVEFIFFLA), and 424 to 444 (FMHGGYAVVILALAIVFVMFI).

This sequence belongs to the HAK/KUP transporter (TC 2.A.72) family.

The protein resides in the cell membrane. The catalysed reaction is K(+)(in) + H(+)(in) = K(+)(out) + H(+)(out). Transport of potassium into the cell. Likely operates as a K(+):H(+) symporter. This is Probable potassium transport system protein Kup from Streptococcus pyogenes serotype M28 (strain MGAS6180).